The primary structure comprises 173 residues: Crossover junction endodeoxyribonuclease RuvC (173 aa).

Catalysis depends on residues D8, E67, and D139. Residues D8, E67, and D139 each contribute to the Mg(2+) site.

It belongs to the RuvC family. As to quaternary structure, homodimer which binds Holliday junction (HJ) DNA. The HJ becomes 2-fold symmetrical on binding to RuvC with unstacked arms; it has a different conformation from HJ DNA in complex with RuvA. In the full resolvosome a probable DNA-RuvA(4)-RuvB(12)-RuvC(2) complex forms which resolves the HJ. It depends on Mg(2+) as a cofactor.

The protein resides in the cytoplasm. The catalysed reaction is Endonucleolytic cleavage at a junction such as a reciprocal single-stranded crossover between two homologous DNA duplexes (Holliday junction).. Its function is as follows. The RuvA-RuvB-RuvC complex processes Holliday junction (HJ) DNA during genetic recombination and DNA repair. Endonuclease that resolves HJ intermediates. Cleaves cruciform DNA by making single-stranded nicks across the HJ at symmetrical positions within the homologous arms, yielding a 5'-phosphate and a 3'-hydroxyl group; requires a central core of homology in the junction. The consensus cleavage sequence is 5'-(A/T)TT(C/G)-3'. Cleavage occurs on the 3'-side of the TT dinucleotide at the point of strand exchange. HJ branch migration catalyzed by RuvA-RuvB allows RuvC to scan DNA until it finds its consensus sequence, where it cleaves and resolves the cruciform DNA. This is Crossover junction endodeoxyribonuclease RuvC from Pseudoalteromonas atlantica (strain T6c / ATCC BAA-1087).